Consider the following 95-residue polypeptide: Aspartyl/glutamyl-tRNA(Asn/Gln) amidotransferase subunit C (95 aa).

Belongs to the GatC family. In terms of assembly, heterotrimer of A, B and C subunits.

The catalysed reaction is L-glutamyl-tRNA(Gln) + L-glutamine + ATP + H2O = L-glutaminyl-tRNA(Gln) + L-glutamate + ADP + phosphate + H(+). It catalyses the reaction L-aspartyl-tRNA(Asn) + L-glutamine + ATP + H2O = L-asparaginyl-tRNA(Asn) + L-glutamate + ADP + phosphate + 2 H(+). Functionally, allows the formation of correctly charged Asn-tRNA(Asn) or Gln-tRNA(Gln) through the transamidation of misacylated Asp-tRNA(Asn) or Glu-tRNA(Gln) in organisms which lack either or both of asparaginyl-tRNA or glutaminyl-tRNA synthetases. The reaction takes place in the presence of glutamine and ATP through an activated phospho-Asp-tRNA(Asn) or phospho-Glu-tRNA(Gln). This is Aspartyl/glutamyl-tRNA(Asn/Gln) amidotransferase subunit C from Rhodopseudomonas palustris (strain BisB18).